Here is a 385-residue protein sequence, read N- to C-terminus: Glutamate 5-kinase (385 aa).

Lys18 is a binding site for ATP. The substrate site is built by Ser57, Asp144, and Asn156. 218-224 (TGGMKSK) serves as a coordination point for ATP. The PUA domain maps to 283-361 (RGVLSIDAGA…SRIEQVLGHK (79 aa)).

The protein belongs to the glutamate 5-kinase family.

It localises to the cytoplasm. The catalysed reaction is L-glutamate + ATP = L-glutamyl 5-phosphate + ADP. It participates in amino-acid biosynthesis; L-proline biosynthesis; L-glutamate 5-semialdehyde from L-glutamate: step 1/2. In terms of biological role, catalyzes the transfer of a phosphate group to glutamate to form L-glutamate 5-phosphate. This Syntrophus aciditrophicus (strain SB) protein is Glutamate 5-kinase.